The sequence spans 58 residues: U11-myrmicitoxin-Tb1a (58 aa).

The propeptide occupies Leu1 to Ala24. Cys34 and Cys57 are disulfide-bonded.

Belongs to the formicidae venom precursor-01 superfamily. In terms of tissue distribution, expressed by the venom gland.

The protein localises to the secreted. Its subcellular location is the target cell membrane. Neurotoxin that causes irreversible rapid flaccid paralysis in blowflies and honeybees upon intrathoracic injection. Causes a quick and irreversible cytolytic effect (at 10 uM) indicating it possibly acts as a pore-forming peptide. Shows only weak effect on aphids (A.pisum) at high doses 24 hours post intrathoracic injection. In vitro, is not cytotoxic on the dipteran S2 Drosophila embryonic cell line. The chain is U11-myrmicitoxin-Tb1a from Tetramorium bicarinatum (Tramp ant).